A 101-amino-acid polypeptide reads, in one-letter code: Interleukin-8 (101 aa).

A signal peptide spans 1 to 22; it reads MTSKLAVALLAAFLLSAALCEG. Citrulline is present on arginine 27. 2 disulfide bridges follow: cysteine 34–cysteine 61 and cysteine 36–cysteine 77.

This sequence belongs to the intercrine alpha (chemokine CxC) family. As to quaternary structure, homodimer. Interacts with TNFAIP6 (via Link domain); this interaction interferes with chemokine binding to glycosaminoglycans. Post-translationally, citrullination at Arg-27 prevents proteolysis, and dampens tissue inflammation, it also enhances leukocytosis, possibly through impaired chemokine clearance from the blood circulation.

The protein localises to the secreted. Its function is as follows. Chemotactic factor that mediates inflammatory response by attracting neutrophils, basophils, and T-cells to clear pathogens and protect the host from infection. Also plays an important role in neutrophil activation. Released in response to an inflammatory stimulus, exerts its effect by binding to the G-protein-coupled receptors CXCR1 and CXCR2, primarily found in neutrophils, monocytes and endothelial cells. G-protein heterotrimer (alpha, beta, gamma subunits) constitutively binds to CXCR1/CXCR2 receptor and activation by IL8 leads to beta and gamma subunits release from Galpha (GNAI2 in neutrophils) and activation of several downstream signaling pathways including PI3K and MAPK pathways. This chain is Interleukin-8 (CXCL8), found in Macaca mulatta (Rhesus macaque).